Reading from the N-terminus, the 509-residue chain is Acetyl-coenzyme A carboxylase carboxyl transferase subunit beta, chloroplastic (509 aa).

The tract at residues 164 to 216 (HGSVCDGESHNSSEGESSSRRTHTKGVDLTIRESSNENERESSNENERKSSND) is disordered. Composition is skewed to basic and acidic residues over residues 170-182 (GESH…ESSS) and 193-216 (TIRE…SSND). In terms of domain architecture, CoA carboxyltransferase N-terminal spans 226–509 (LWLQCENCYG…LNQNSNQVEC (284 aa)). Positions 230, 233, 249, and 252 each coordinate Zn(2+). The C4-type zinc-finger motif lies at 230-252 (CENCYGLNYKKFLKSKMNICEQC). The segment at 288-307 (FDSEGEQEQEQEQEQEEEET) is disordered.

This sequence belongs to the AccD/PCCB family. Acetyl-CoA carboxylase is a heterohexamer composed of biotin carboxyl carrier protein, biotin carboxylase and 2 subunits each of ACCase subunit alpha and ACCase plastid-coded subunit beta (accD). It depends on Zn(2+) as a cofactor.

It is found in the plastid. The protein resides in the chloroplast stroma. It catalyses the reaction N(6)-carboxybiotinyl-L-lysyl-[protein] + acetyl-CoA = N(6)-biotinyl-L-lysyl-[protein] + malonyl-CoA. Its pathway is lipid metabolism; malonyl-CoA biosynthesis; malonyl-CoA from acetyl-CoA: step 1/1. Its function is as follows. Component of the acetyl coenzyme A carboxylase (ACC) complex. Biotin carboxylase (BC) catalyzes the carboxylation of biotin on its carrier protein (BCCP) and then the CO(2) group is transferred by the transcarboxylase to acetyl-CoA to form malonyl-CoA. This is Acetyl-coenzyme A carboxylase carboxyl transferase subunit beta, chloroplastic from Ipomoea purpurea (Common morning glory).